The following is a 465-amino-acid chain: Presenilin spe-4 (465 aa).

Topologically, residues M1 to R18 are cytoplasmic. A helical membrane pass occupies residues W19–Y39. Topologically, residues N40–N71 are lumenal. Residues G72–F92 form a helical membrane-spanning segment. The Cytoplasmic segment spans residues D93–R96. Residues I97 to T117 traverse the membrane as a helical segment. Residues L118–M136 are Lumenal-facing. A helical transmembrane segment spans residues T137–F157. Topologically, residues S158–S160 are cytoplasmic. A helical transmembrane segment spans residues S161–L181. Residues R182–W190 are Lumenal-facing. Residues F191–L211 form a helical membrane-spanning segment. The active site involves D200. Residues K212–R389 are Cytoplasmic-facing. The tract at residues I287–D356 is disordered. Residues S326–S350 are compositionally biased toward low complexity. The helical transmembrane segment at L390 to C410 threads the bilayer. Residue D394 is part of the active site. Position 411 (P411) is a topological domain, lumenal. The helical transmembrane segment at F412–F432 threads the bilayer. Residues S433 to T439 lie on the Cytoplasmic side of the membrane. The PAL motif lies at P440–L442. The helical intramembrane region spans P440–W460. Topologically, residues E461–G465 are cytoplasmic.

This sequence belongs to the peptidase A22A family. As to quaternary structure, homodimer. Potential component of the gamma-secretase complex, a complex probably composed of the presenilin homodimer (sel-12, hop-1 or spe-4), nicastrin (aph-2), aph-1 and pen-2.

The protein localises to the endoplasmic reticulum membrane. It localises to the golgi apparatus. Its subcellular location is the cis-Golgi network membrane. Its function is as follows. Potential catalytic subunit of the gamma-secretase complex during spermatogenesis, an endoprotease complex that catalyzes the intramembrane cleavage of integral membrane proteins such as Notch receptors (lin-12 or glp-1). Involved in spermatid formation during meiosis II. May be required for proper localization of macromolecules that are subject to asymmetric partitioning during spermatogenesis. This Caenorhabditis elegans protein is Presenilin spe-4.